Consider the following 556-residue polypeptide: Arginine--tRNA ligase (556 aa).

A 'HIGH' region motif is present at residues 129–139; the sequence is ANPTGPLHVGH.

This sequence belongs to the class-I aminoacyl-tRNA synthetase family. In terms of assembly, monomer.

The protein resides in the cytoplasm. It carries out the reaction tRNA(Arg) + L-arginine + ATP = L-arginyl-tRNA(Arg) + AMP + diphosphate. The protein is Arginine--tRNA ligase of Desulfosudis oleivorans (strain DSM 6200 / JCM 39069 / Hxd3) (Desulfococcus oleovorans).